The primary structure comprises 1111 residues: Protein STU1 (1111 aa).

HEAT repeat units follow at residues 95–133 (ALPL…ERSV) and 167–205 (YVPT…KSDL). Disordered regions lie at residues 225–245 (ELNP…VEPS) and 476–751 (RLLQ…VDEE). Polar residues predominate over residues 502 to 511 (SKSTMGTSKP). The segment covering 704 to 714 (PREEQRFVKPV) has biased composition (basic and acidic residues).

This sequence belongs to the CLASP family. As to quaternary structure, interacts with microtubules.

The protein localises to the cytoplasm. It localises to the cytoskeleton. The protein resides in the nucleus. It is found in the spindle. Its function is as follows. Microtubule binding protein that promotes the stabilization of dynamic microtubules. Required for mitotic spindle formation. This is Protein STU1 (STU1) from Chaetomium globosum (strain ATCC 6205 / CBS 148.51 / DSM 1962 / NBRC 6347 / NRRL 1970) (Soil fungus).